Here is a 720-residue protein sequence, read N- to C-terminus: MLRVLHRAASALVMATVIGLAPAVAFALAEPTSTPQAPIAAYKPRSNEILWDGYGVPHIYGVDAPSAFYGYGWAQARSHGDNILRLYGEARGKGAEYWGPDYEQTTVWLLTNGVPERAQQWYAQQSPDFRANLDAFAAGINAYAQQNPDDISPEVRQVLPVSGADVVAHAHRLMNFLYVASPGRTLGEGDPPDLADQGSNSWAVAPGKTANGNALLLQNPHLSWTTDYFTYYEAHLVTPDFEIYGATQIGLPVIRFAFNQRMGITNTVNGMVGATNYRLTLQDGGYLYDGQVRPFERPQASYRLRQADGTTVDKPLEIRSSVHGPVFERADGTAVAVRVAGLDRPGMLEQYFDMITADSFDDYEAALARMQVPTFNIVYADREGTINYSFNGVAPKRAEGDIAFWQGLVPGDSSRYLWTETHPLDDLPRVTNPPGGFVQNSNDPPWTPTWPVTYTPKDFPSYLAPQTPHSLRAQQSVRLMSENDDLTLERFMALQLSHRAVMADRTLPDLIPAALIDPDPEVQAAARLLAAWDREFTSDSRAALLFEEWARLFAGQNFAGQAGFATPWSLDKPVSTPYGVRDPKAAVDQLRTAIANTKRKYGAIDRPFGDASRMILNDVNVPGAAGYGNLGSFRVFTWSDPDENGVRTPVHGETWVAMIEFSTPVRAYGLMSYGNSRQPGTTHYSDQIERVSRADFRELLLRREQVEAAVQERTPFNFKP.

The N-terminal stretch at 1-29 is a signal peptide; the sequence is MLRVLHRAASALVMATVIGLAPAVAFALA. The propeptide at 190-198 is spacer peptide; sequence DPPDLADQG. Residue S199 is the Nucleophile of the active site. Catalysis depends on residues H221 and E653.

The protein belongs to the peptidase S45 family. As to quaternary structure, heterotetramer of two alpha and two beta subunits processed from the same precursor.

The protein resides in the periplasm. The catalysed reaction is (7R)-7-(4-carboxybutanamido)cephalosporanate + H2O = (7R)-7-aminocephalosporanate + glutarate. Functionally, catalyzes the deacylation of 7 beta-(4-carboxybutanamido)cephalosporanic acid (glutaryl-7-aminocephalosporanic acid or GL-7-ACA) to 7-aminocephalosporanic acid (7-ACA). The sequence is that of Glutaryl-7-aminocephalosporanic-acid acylase from Pseudomonas sp. (strain SY-77).